Consider the following 576-residue polypeptide: Arginine--tRNA ligase (576 aa).

A 'HIGH' region motif is present at residues 122–132 (PNVAKEMHVGH).

Belongs to the class-I aminoacyl-tRNA synthetase family. Monomer.

It localises to the cytoplasm. It catalyses the reaction tRNA(Arg) + L-arginine + ATP = L-arginyl-tRNA(Arg) + AMP + diphosphate. The chain is Arginine--tRNA ligase from Sodalis glossinidius (strain morsitans).